A 334-amino-acid chain; its full sequence is MSTQEATLQQPLLQAIDLKKHYPVKKGMFAPERLVKALDGVSFNLERGKTLAVVGESGCGKSTLGRLLTMIEMPTGGELYYQGQDLLKHDPQAQKLRRQKIQIVFQNPYGSLNPRKKVGQILEEPLLINTSLSKEQRREKALSMMAKVGLKTEHYDRYPHMFSGGQRQRIAIARGLMLDPDVVIADEPVSALDVSVRAQVLNLMMDLQQELGLSYVFISHDLSVVEHIADEVMVMYLGRCVEKGTKDQIFNNPRHPYTQALLSATPRLNPDDRRERIKLSGELPSPLNPPPGCAFNARCRRRFGPCTQLQPQLKDYGGQLVACFAVDQDENPQR.

In terms of domain architecture, ABC transporter spans 13–262; sequence LQAIDLKKHY…PRHPYTQALL (250 aa). 55–62 lines the ATP pocket; the sequence is GESGCGKS.

It belongs to the ABC transporter superfamily. As to quaternary structure, the complex is composed of two ATP-binding proteins (DppD and DppF), two transmembrane proteins (DppB and DppC) and a solute-binding protein (DppA). MppA can replace DppA as binding protein for heme and ALA transport.

The protein localises to the cell inner membrane. It catalyses the reaction a dipeptide(out) + ATP + H2O = a dipeptide(in) + ADP + phosphate + H(+). In terms of biological role, part of the ABC transporter DppABCDF involved in dipeptide transport. Responsible for energy coupling to the transport system. Functionally, when a foreign outer membrane heme receptor is expressed in E.coli, DppABCDF can also transport heme and its precursor, 5-aminolevulinic acid (ALA), from the periplasm into the cytoplasm. This is Dipeptide transport ATP-binding protein DppF (dppF) from Escherichia coli (strain K12).